A 506-amino-acid chain; its full sequence is Voltage-gated potassium channel regulatory subunit KCNG4 (506 aa).

Over 1 to 216 (MPMSSRDRDL…EMVEDPQSGL (216 aa)) the chain is Cytoplasmic. A helical membrane pass occupies residues 217 to 238 (PGKVFACLSVLFVATTAVSLCV). Residues 239 to 259 (STMPDFRAEEGKGECTRKCYY) are Extracellular-facing. Residues 260 to 281 (IFVVESICVAWFSLEFCLRFVQ) traverse the membrane as a helical segment. The Cytoplasmic segment spans residues 282 to 292 (APNKCQFFRGP). Residues 293 to 312 (LNVIDILAISPYYVSLAVSD) traverse the membrane as a helical segment. At 313–326 (ESPEAGERPSSSSY) the chain is on the extracellular side. A helical; Voltage-sensor transmembrane segment spans residues 327–351 (LEKVGLVLRVLRALRILYVMRLARH). Topologically, residues 352–366 (SLGLQTLGLTVRRCA) are cytoplasmic. A helical transmembrane segment spans residues 367–388 (REFGLLMLFLAVAVTLFSPLVY). The Extracellular segment spans residues 389-403 (VAENESGRVLEFTSI). The helical intramembrane region spans 404 to 415 (PASYWWAIISMT). A Selectivity filter motif is present at residues 416–421 (TVGYGD). Residues 416-423 (TVGYGDMV) lie within the membrane without spanning it. Over 424–430 (PRSVPGQ) the chain is Extracellular. Residues 431–459 (MVALSSILSGILIMAFPATSIFHTFSHSY) form a helical membrane-spanning segment. At 460–506 (LELKREQEQVQARLRRLQNTNSASERELLSDVDDLVPEGLTSPGRYM) the chain is on the cytoplasmic side.

It belongs to the potassium channel family. G (TC 1.A.1.2) subfamily. Kv6.4/KCNG4 sub-subfamily. As to quaternary structure, heterotetramer with KCNB1. Does not form homomultimer.

It is found in the cell membrane. In terms of biological role, regulatory subunit of the voltage-gated potassium (Kv) channel which, when coassembled with KCNB1, modulates the kinetics parameters of the heterotetrameric channel namely the time course of activation, deactivation and inactivation and on the voltage-dependence of activation. Potassium channel subunit that does not form functional channels by itself. Reduces the deactivation rate. Modulates the threshold for activation by shifting by approximately 20 mV in hyperpolarizing direction. Markedly changes the inactivation by shifting the voltage dependence of inactivation by approximately 40 mV in hyperpolarizing direction. Acceleratee activation and enhances the time course of activation. In Mus musculus (Mouse), this protein is Voltage-gated potassium channel regulatory subunit KCNG4.